The sequence spans 159 residues: NADH-quinone oxidoreductase subunit I (159 aa).

4Fe-4S ferredoxin-type domains lie at 51 to 80 (RRYEHGEERCIACKLCEAICPAQAIVIEAD) and 90 to 119 (TRYDIDMTKCIYCGLCQEACPVDAIVEGPN). [4Fe-4S] cluster contacts are provided by cysteine 60, cysteine 63, cysteine 66, cysteine 70, cysteine 99, cysteine 102, cysteine 105, and cysteine 109.

Belongs to the complex I 23 kDa subunit family. In terms of assembly, NDH-1 is composed of 14 different subunits. Subunits NuoA, H, J, K, L, M, N constitute the membrane sector of the complex. It depends on [4Fe-4S] cluster as a cofactor.

It is found in the cell inner membrane. It catalyses the reaction a quinone + NADH + 5 H(+)(in) = a quinol + NAD(+) + 4 H(+)(out). Functionally, NDH-1 shuttles electrons from NADH, via FMN and iron-sulfur (Fe-S) centers, to quinones in the respiratory chain. The immediate electron acceptor for the enzyme in this species is believed to be ubiquinone. Couples the redox reaction to proton translocation (for every two electrons transferred, four hydrogen ions are translocated across the cytoplasmic membrane), and thus conserves the redox energy in a proton gradient. This is NADH-quinone oxidoreductase subunit I from Rickettsia rickettsii (strain Sheila Smith).